Here is a 150-residue protein sequence, read N- to C-terminus: Transcriptional repressor NrdR (150 aa).

A zinc finger spans residues 3-34 (CPYCQFEDTRVIDSRLASEGEQVRRRRECNRC). In terms of domain architecture, ATP-cone spans 49-139 (PRIVKRDGTR…VYRSFEDVSA (91 aa)).

It belongs to the NrdR family. It depends on Zn(2+) as a cofactor.

In terms of biological role, negatively regulates transcription of bacterial ribonucleotide reductase nrd genes and operons by binding to NrdR-boxes. The chain is Transcriptional repressor NrdR from Alkalilimnicola ehrlichii (strain ATCC BAA-1101 / DSM 17681 / MLHE-1).